A 137-amino-acid chain; its full sequence is Fluoride-specific ion channel FluC (137 aa).

4 helical membrane passes run 11 to 31 (IAVS…SLWF), 42 to 62 (GTLF…ALAL), 75 to 95 (LIAV…LDTF), and 107 to 127 (GFYW…GIIL). 2 residues coordinate Na(+): Gly-82 and Thr-85.

This sequence belongs to the fluoride channel Fluc/FEX (TC 1.A.43) family.

It localises to the cell inner membrane. The enzyme catalyses fluoride(in) = fluoride(out). Na(+) is not transported, but it plays an essential structural role and its presence is essential for fluoride channel function. Its function is as follows. Fluoride-specific ion channel. Important for reducing fluoride concentration in the cell, thus reducing its toxicity. This Trichormus variabilis (strain ATCC 29413 / PCC 7937) (Anabaena variabilis) protein is Fluoride-specific ion channel FluC.